The sequence spans 31 residues: Monocyclic monoterpene ketone monooxygenase (31 aa).

FAD is bound at residue 20 to 25; that stretch reads GAGFXG.

In terms of assembly, monomer. The cofactor is FAD.

It catalyses the reaction 1-hydroxylimonen-2-one + NADPH + O2 = 3-isopropenyl-6-oxoheptanoate + NADP(+) + H2O. It carries out the reaction (1R,4S)-1-hydroxylimonen-2-one + NADPH + O2 + H(+) = (4S,7S)-7-hydroxy-4-isopropenyl-7-methyloxepan-2-one + NADP(+) + H2O. The catalysed reaction is (1S,4R)-1-hydroxylimonen-2-one + NADPH + O2 + H(+) = (4R,7R)-7-hydroxy-4-isopropenyl-7-methyloxepan-2-one + NADP(+) + H2O. The enzyme catalyses (1R,4R)-dihydrocarvone + NADPH + O2 + H(+) = (4R,7R)-4-isopropenyl-7-methyloxepan-2-one + NADP(+) + H2O. It catalyses the reaction (1S,4R)-menthone + NADPH + O2 + H(+) = (4S,7R)-7-isopropyl-4-methyloxepan-2-one + NADP(+) + H2O. It carries out the reaction (1R,4S)-menthone + NADPH + O2 + H(+) = (4R,7S)-7-isopropyl-4-methyloxepan-2-one + NADP(+) + H2O. The catalysed reaction is (1S,4R)-isodihydrocarvone + NADPH + O2 + H(+) = (3S,6R)-6-isopropenyl-3-methyloxepan-2-one + NADP(+) + H2O. Its pathway is terpene metabolism; monoterpene degradation. Its function is as follows. Catalyzes the NADPH- and oxygen-dependent oxidation of the monocyclic monoterpene ketones 1-hydroxy-2-oxolimonene, dihydrocarvone and menthone. Is able to convert all enantiomers of these natural substrates with almost equal efficiency. Is thus involved in the conversion of the monocyclic monoterpene ketone intermediates formed in the degradation pathways of all stereoisomers of three different monocyclic monoterpenes, i.e. limonene, (dihydro)carveol and menthol, which likely make R.erythropolis able to grow on these compounds as the sole source of carbon and energy. This is Monocyclic monoterpene ketone monooxygenase from Rhodococcus erythropolis (Arthrobacter picolinophilus).